The chain runs to 674 residues: Cysteine-rich receptor-like protein kinase 6 (674 aa).

Positions 1-24 are cleaved as a signal peptide; it reads MSSLISFNFLFLFSFLTSSFTASA. Residues 25 to 289 lie on the Extracellular side of the membrane; the sequence is QDPFYLNHYC…LPGKSGNSTV (265 aa). Gnk2-homologous domains follow at residues 28 to 132 and 139 to 245; these read FYLN…HKNI and NEGE…LYPF. Residues Asn-36, Asn-43, Asn-61, Asn-70, Asn-104, Asn-178, and Asn-247 are each glycosylated (N-linked (GlcNAc...) asparagine). Residues 254–266 are compositionally biased toward pro residues; sequence PPLPPPPPPPPPR. The tract at residues 254–284 is disordered; sequence PPLPPPPPPPPPRESLVSTPPISSSSLPGKS. Residues 268–284 show a composition bias toward low complexity; that stretch reads SLVSTPPISSSSLPGKS. An N-linked (GlcNAc...) asparagine glycan is attached at Asn-286. Residues 290–310 traverse the membrane as a helical segment; the sequence is LVVAVVVLAVLLFIALVGYCF. Topologically, residues 311–674 are cytoplasmic; it reads LAKKKKKTFD…DESITDLYPR (364 aa). Residues 351–637 form the Protein kinase domain; sequence FAESNKIGRG…TLPVPRQPGF (287 aa). ATP-binding positions include 357–365 and Lys-379; that span reads IGRGGFGEV. At Tyr-424 the chain carries Phosphotyrosine. The active-site Proton acceptor is the Asp-476. Ser-480 is modified (phosphoserine). Position 516 is a phosphothreonine (Thr-516). Tyr-524 carries the phosphotyrosine modification. Positions 648 to 674 are disordered; the sequence is LDSDQSTTTKSFPASIDDESITDLYPR. A compositionally biased stretch (polar residues) spans 650–659; that stretch reads SDQSTTTKSF.

The protein belongs to the protein kinase superfamily. Ser/Thr protein kinase family. CRK subfamily.

It localises to the membrane. It catalyses the reaction L-seryl-[protein] + ATP = O-phospho-L-seryl-[protein] + ADP + H(+). It carries out the reaction L-threonyl-[protein] + ATP = O-phospho-L-threonyl-[protein] + ADP + H(+). The polypeptide is Cysteine-rich receptor-like protein kinase 6 (CRK6) (Arabidopsis thaliana (Mouse-ear cress)).